The following is a 112-amino-acid chain: Colipase (112 aa).

An N-terminal signal peptide occupies residues 1-17 (MEKVLILLLVALAVAYA). A propeptide spans 18–22 (VPDPR) (enterostatin, activation peptide). Intrachain disulfides connect C34–C45, C40–C56, C44–C78, C66–C86, and C80–C104.

The protein belongs to the colipase family. Forms a 1:1 stoichiometric complex with pancreatic lipase.

The protein resides in the secreted. In terms of biological role, colipase is a cofactor of pancreatic lipase. It allows the lipase to anchor itself to the lipid-water interface. Without colipase the enzyme is washed off by bile salts, which have an inhibitory effect on the lipase. Its function is as follows. Enterostatin has a biological activity as a satiety signal. This chain is Colipase (CLPS), found in Bos taurus (Bovine).